The sequence spans 545 residues: CTP synthase (545 aa).

The segment at 1 to 266 (MTTNYIFVTG…DDYICKRFGL (266 aa)) is amidoligase domain. Position 14 (Ser-14) interacts with CTP. Ser-14 lines the UTP pocket. Residues 15 to 20 (SLGKGI) and Asp-72 contribute to the ATP site. Asp-72 and Glu-140 together coordinate Mg(2+). CTP contacts are provided by residues 147-149 (DIE), 187-192 (KTKPTQ), and Lys-223. UTP is bound by residues 187–192 (KTKPTQ) and Lys-223. ATP is bound at residue 239-241 (KDV). The Glutamine amidotransferase type-1 domain occupies 291 to 542 (TIGMVGKYIA…VKAAGEYQKR (252 aa)). L-glutamine is bound at residue Gly-352. Cys-379 functions as the Nucleophile; for glutamine hydrolysis in the catalytic mechanism. L-glutamine-binding positions include 380 to 383 (LGMQ), Glu-403, and Arg-470. Active-site residues include His-515 and Glu-517.

This sequence belongs to the CTP synthase family. Homotetramer.

It carries out the reaction UTP + L-glutamine + ATP + H2O = CTP + L-glutamate + ADP + phosphate + 2 H(+). The enzyme catalyses L-glutamine + H2O = L-glutamate + NH4(+). It catalyses the reaction UTP + NH4(+) + ATP = CTP + ADP + phosphate + 2 H(+). Its pathway is pyrimidine metabolism; CTP biosynthesis via de novo pathway; CTP from UDP: step 2/2. Its activity is regulated as follows. Allosterically activated by GTP, when glutamine is the substrate; GTP has no effect on the reaction when ammonia is the substrate. The allosteric effector GTP functions by stabilizing the protein conformation that binds the tetrahedral intermediate(s) formed during glutamine hydrolysis. Inhibited by the product CTP, via allosteric rather than competitive inhibition. Its function is as follows. Catalyzes the ATP-dependent amination of UTP to CTP with either L-glutamine or ammonia as the source of nitrogen. Regulates intracellular CTP levels through interactions with the four ribonucleotide triphosphates. This Sodalis glossinidius (strain morsitans) protein is CTP synthase.